The primary structure comprises 550 residues: Thermosome subunit (550 aa).

A disordered region spans residues 529–550 (KEKEGEKGGGGSEDFSSSSDLD). Low complexity predominate over residues 541-550 (EDFSSSSDLD).

Belongs to the TCP-1 chaperonin family. As to quaternary structure, forms an oligomeric complex of eight-membered rings.

In terms of biological role, molecular chaperone; binds unfolded polypeptides in vitro, and has a weak ATPase activity. The polypeptide is Thermosome subunit (ths) (Pyrococcus abyssi (strain GE5 / Orsay)).